Here is a 349-residue protein sequence, read N- to C-terminus: Histidinol-phosphate aminotransferase (349 aa).

An N6-(pyridoxal phosphate)lysine modification is found at lysine 210.

This sequence belongs to the class-II pyridoxal-phosphate-dependent aminotransferase family. Histidinol-phosphate aminotransferase subfamily. Homodimer. It depends on pyridoxal 5'-phosphate as a cofactor.

The catalysed reaction is L-histidinol phosphate + 2-oxoglutarate = 3-(imidazol-4-yl)-2-oxopropyl phosphate + L-glutamate. It functions in the pathway amino-acid biosynthesis; L-histidine biosynthesis; L-histidine from 5-phospho-alpha-D-ribose 1-diphosphate: step 7/9. This is Histidinol-phosphate aminotransferase from Flavobacterium johnsoniae (strain ATCC 17061 / DSM 2064 / JCM 8514 / BCRC 14874 / CCUG 350202 / NBRC 14942 / NCIMB 11054 / UW101) (Cytophaga johnsonae).